A 473-amino-acid polypeptide reads, in one-letter code: 3-isopropylmalate dehydratase large subunit (473 aa).

[4Fe-4S] cluster contacts are provided by Cys-353, Cys-414, and Cys-417.

This sequence belongs to the aconitase/IPM isomerase family. LeuC type 1 subfamily. As to quaternary structure, heterodimer of LeuC and LeuD. [4Fe-4S] cluster is required as a cofactor.

It carries out the reaction (2R,3S)-3-isopropylmalate = (2S)-2-isopropylmalate. Its pathway is amino-acid biosynthesis; L-leucine biosynthesis; L-leucine from 3-methyl-2-oxobutanoate: step 2/4. Functionally, catalyzes the isomerization between 2-isopropylmalate and 3-isopropylmalate, via the formation of 2-isopropylmaleate. This is 3-isopropylmalate dehydratase large subunit from Cellvibrio japonicus (strain Ueda107) (Pseudomonas fluorescens subsp. cellulosa).